The primary structure comprises 250 residues: 2,3-bisphosphoglycerate-dependent phosphoglycerate mutase (250 aa).

Substrate-binding positions include 10–17, 23–24, Arg-62, 89–92, Lys-100, 116–117, and 185–186; these read RHGESQWN, TG, ERHY, RR, and GN. The active-site Tele-phosphohistidine intermediate is the His-11. The active-site Proton donor/acceptor is Glu-89.

The protein belongs to the phosphoglycerate mutase family. BPG-dependent PGAM subfamily. As to quaternary structure, homodimer.

The catalysed reaction is (2R)-2-phosphoglycerate = (2R)-3-phosphoglycerate. It participates in carbohydrate degradation; glycolysis; pyruvate from D-glyceraldehyde 3-phosphate: step 3/5. In terms of biological role, catalyzes the interconversion of 2-phosphoglycerate and 3-phosphoglycerate. In Salmonella paratyphi A (strain ATCC 9150 / SARB42), this protein is 2,3-bisphosphoglycerate-dependent phosphoglycerate mutase.